The primary structure comprises 105 residues: uncharacterized protein (105 aa).

This is an uncharacterized protein from Saccharomyces cerevisiae (strain ATCC 204508 / S288c) (Baker's yeast).